The primary structure comprises 739 residues: Phosphoribosylformylglycinamidine synthase subunit PurL (739 aa).

Residue His53 is part of the active site. Tyr56 and Lys95 together coordinate ATP. Glu97 lines the Mg(2+) pocket. Residues 98 to 101 and Arg120 each bind substrate; that span reads SHNH. The Proton acceptor role is filled by His99. Asp121 contacts Mg(2+). Gln244 provides a ligand contact to substrate. Asp274 is a Mg(2+) binding site. 318 to 320 contacts substrate; sequence ESQ. Residues Asp501 and Gly538 each contribute to the ATP site. Residue Asn539 participates in Mg(2+) binding. Ser541 contributes to the substrate binding site.

This sequence belongs to the FGAMS family. As to quaternary structure, monomer. Part of the FGAM synthase complex composed of 1 PurL, 1 PurQ and 2 PurS subunits.

The protein resides in the cytoplasm. It catalyses the reaction N(2)-formyl-N(1)-(5-phospho-beta-D-ribosyl)glycinamide + L-glutamine + ATP + H2O = 2-formamido-N(1)-(5-O-phospho-beta-D-ribosyl)acetamidine + L-glutamate + ADP + phosphate + H(+). It functions in the pathway purine metabolism; IMP biosynthesis via de novo pathway; 5-amino-1-(5-phospho-D-ribosyl)imidazole from N(2)-formyl-N(1)-(5-phospho-D-ribosyl)glycinamide: step 1/2. In terms of biological role, part of the phosphoribosylformylglycinamidine synthase complex involved in the purines biosynthetic pathway. Catalyzes the ATP-dependent conversion of formylglycinamide ribonucleotide (FGAR) and glutamine to yield formylglycinamidine ribonucleotide (FGAM) and glutamate. The FGAM synthase complex is composed of three subunits. PurQ produces an ammonia molecule by converting glutamine to glutamate. PurL transfers the ammonia molecule to FGAR to form FGAM in an ATP-dependent manner. PurS interacts with PurQ and PurL and is thought to assist in the transfer of the ammonia molecule from PurQ to PurL. The protein is Phosphoribosylformylglycinamidine synthase subunit PurL of Listeria monocytogenes serotype 4b (strain CLIP80459).